The primary structure comprises 180 residues: MKSIYFVAGLFVMLVQGSWQRSLQDTEEKSRSFSASQADPLSDPDQMNEDKRHSQGTFTSDYSKYLDSRRAQDFVQWLMNTKRNRNNIAKRHDEFERHAEGTFTSDVSSYLEGQAAKEFIAWLVKGRGRRDFPEEVAIVEELGRRHADGSFSDEMNTILDNLAARDFINWLIQTKITDRK.

The N-terminal stretch at 1–20 (MKSIYFVAGLFVMLVQGSWQ) is a signal peptide. The interval 26–59 (TEEKSRSFSASQADPLSDPDQMNEDKRHSQGTFT) is disordered. Ser-54 bears the Phosphoserine mark. The propeptide occupies 84 to 89 (NRNNIA). Phosphoserine occurs at positions 105 and 108. Arg-127 carries the post-translational modification Arginine amide. Residues 131–145 (DFPEEVAIVEELGRR) constitute a propeptide that is removed on maturation. Phosphoserine is present on residues Ser-150 and Ser-152.

It belongs to the glucagon family. In terms of processing, proglucagon is post-translationally processed in a tissue-specific manner in pancreatic A cells and intestinal L cells. In pancreatic A cells, the major bioactive hormone is glucagon cleaved by PCSK2/PC2. In the intestinal L cells PCSK1/PC1 liberates GLP-1, GLP-2, glicentin and oxyntomodulin. GLP-1 is further N-terminally truncated by post-translational processing in the intestinal L cells resulting in GLP-1(7-37) GLP-1-(7-36)amide. The C-terminal amidation is neither important for the metabolism of GLP-1 nor for its effects on the endocrine pancreas. Secreted in the A cells of the islets of Langerhans. In terms of tissue distribution, secreted in the A cells of the islets of Langerhans. Secreted from enteroendocrine L cells throughout the gastrointestinal tract. Also secreted in selected neurons in the brain. As to expression, secreted from enteroendocrine cells throughout the gastrointestinal tract. Also secreted in selected neurons in the brain. Secreted from enteroendocrine cells throughout the gastrointestinal tract.

It localises to the secreted. Functionally, plays a key role in glucose metabolism and homeostasis. Regulates blood glucose by increasing gluconeogenesis and decreasing glycolysis. A counterregulatory hormone of insulin, raises plasma glucose levels in response to insulin-induced hypoglycemia. Plays an important role in initiating and maintaining hyperglycemic conditions in diabetes. In terms of biological role, potent stimulator of glucose-dependent insulin release. Also stimulates insulin release in response to IL6. Plays important roles on gastric motility and the suppression of plasma glucagon levels. May be involved in the suppression of satiety and stimulation of glucose disposal in peripheral tissues, independent of the actions of insulin. Has growth-promoting activities on intestinal epithelium. May also regulate the hypothalamic pituitary axis (HPA) via effects on LH, TSH, CRH, oxytocin, and vasopressin secretion. Increases islet mass through stimulation of islet neogenesis and pancreatic beta cell proliferation. Inhibits beta cell apoptosis. Stimulates intestinal growth and up-regulates villus height in the small intestine, concomitant with increased crypt cell proliferation and decreased enterocyte apoptosis. The gastrointestinal tract, from the stomach to the colon is the principal target for GLP-2 action. Plays a key role in nutrient homeostasis, enhancing nutrient assimilation through enhanced gastrointestinal function, as well as increasing nutrient disposal. Stimulates intestinal glucose transport and decreases mucosal permeability. Its function is as follows. Significantly reduces food intake. Inhibits gastric emptying in humans. Suppression of gastric emptying may lead to increased gastric distension, which may contribute to satiety by causing a sensation of fullness. Functionally, may modulate gastric acid secretion and the gastro-pyloro-duodenal activity. May play an important role in intestinal mucosal growth in the early period of life. The sequence is that of Pro-glucagon from Homo sapiens (Human).